A 701-amino-acid polypeptide reads, in one-letter code: Elongation factor G (701 aa).

One can recognise a tr-type G domain in the interval 8 to 290 (ERYRNIGISA…AVVDYLPAPT (283 aa)). Residues 17–24 (AHIDAGKT), 88–92 (DTPGH), and 142–145 (NKMD) each bind GTP.

The protein belongs to the TRAFAC class translation factor GTPase superfamily. Classic translation factor GTPase family. EF-G/EF-2 subfamily.

Its subcellular location is the cytoplasm. Its function is as follows. Catalyzes the GTP-dependent ribosomal translocation step during translation elongation. During this step, the ribosome changes from the pre-translocational (PRE) to the post-translocational (POST) state as the newly formed A-site-bound peptidyl-tRNA and P-site-bound deacylated tRNA move to the P and E sites, respectively. Catalyzes the coordinated movement of the two tRNA molecules, the mRNA and conformational changes in the ribosome. This chain is Elongation factor G, found in Aeromonas salmonicida (strain A449).